The primary structure comprises 231 residues: Movement and silencing protein TGBp1 (231 aa).

One can recognise a (+)RNA virus helicase ATP-binding domain in the interval 1–123; that stretch reads MDVFVKILSD…FKAVLSKRFG (123 aa). A (+)RNA virus helicase C-terminal domain is found at 124-231; it reads SCTAQLLREL…MTPDASYTST (108 aa).

It belongs to the Tymovirales TGBp1 protein family. In terms of assembly, homodimer and homooligomer. Interacts with capsid protein. Interacts with host AGO1; this interaction targets the host protein for degradation, thereby suppressing the antiviral RNA silencing.

The protein localises to the host cytoplasm. Functionally, transports viral genome to neighboring plant cells directly through plasmosdesmata, without any budding. The movement protein allows efficient cell to cell propagation, by bypassing the host cell wall barrier. Increases plasmodesma size exclusion limit. Acts as a suppressor of RNA-mediated gene silencing, also known as post-transcriptional gene silencing (PTGS), a mechanism of plant viral defense that limits the accumulation of viral RNAs. The sequence is that of Movement and silencing protein TGBp1 from Chrysanthemum morifolium (Florist's daisy).